Consider the following 171-residue polypeptide: 3-hydroxydecanoyl-[acyl-carrier-protein] dehydratase (171 aa).

H70 is an active-site residue.

This sequence belongs to the thioester dehydratase family. FabA subfamily. Homodimer.

Its subcellular location is the cytoplasm. The catalysed reaction is a (3R)-hydroxyacyl-[ACP] = a (2E)-enoyl-[ACP] + H2O. The enzyme catalyses (3R)-hydroxydecanoyl-[ACP] = (2E)-decenoyl-[ACP] + H2O. It carries out the reaction (2E)-decenoyl-[ACP] = (3Z)-decenoyl-[ACP]. The protein operates within lipid metabolism; fatty acid biosynthesis. Functionally, necessary for the introduction of cis unsaturation into fatty acids. Catalyzes the dehydration of (3R)-3-hydroxydecanoyl-ACP to E-(2)-decenoyl-ACP and then its isomerization to Z-(3)-decenoyl-ACP. Can catalyze the dehydratase reaction for beta-hydroxyacyl-ACPs with saturated chain lengths up to 16:0, being most active on intermediate chain length. This Histophilus somni (strain 129Pt) (Haemophilus somnus) protein is 3-hydroxydecanoyl-[acyl-carrier-protein] dehydratase.